The primary structure comprises 145 residues: MEGNLLVIDKRVLPEVFEKVINAKRLLKEGKVKEITEAAKQAGISRSVYYKYKDYIFEFAETLQGRKVIFNMVVTHEKGVLSSVLNILSDVGGNILTIDQGLPIHGLAHVSFTIDISTMKCDIKEMLNEIELVHGVEKVEFVAME.

The region spanning 69 to 144 (IFNMVVTHEK…GVEKVEFVAM (76 aa)) is the ACT domain.

Belongs to the UPF0735 family.

The chain is UPF0735 ACT domain-containing protein CPE1414 from Clostridium perfringens (strain 13 / Type A).